The primary structure comprises 372 residues: MVRRALRLAAGTASLAAGTWLLRALHGTPAALGADAASIRAVSEQSPNYRDGAFVNLDPASMFTLDREELRLIVWELVARHSASRPAAPIPLASPNIYRGDASRLAVSWFGHSTALLEIDGYRVLTDPVWSDRCSPSDVVGPQRLHPPPVQLAALPAVDAVVISHDHYDHLDIDTVVALVGMQRAPFLVPLGVGAHLRSWGVPQDRIVELDWNQSAQVDELTVVCVPARHFSGRFLSRNTTLWASWAFVGPNHRAYFGGDTGYTKSFTQIGADHGPFDLTLLPIGAYNTAWPDIHMNPEEAVRAHLDVTDSGSGMLVPVHWGTFRLAPHPWGEPVERLLAAAEPEHVTVAVPLPGQRVDPTGPMRLHPWWRL.

The signal sequence occupies residues 1–33; that stretch reads MVRRALRLAAGTASLAAGTWLLRALHGTPAALG.

To K.pneumoniae RomA.

This is an uncharacterized protein from Mycobacterium bovis (strain ATCC BAA-935 / AF2122/97).